A 638-amino-acid polypeptide reads, in one-letter code: Threonine--tRNA ligase (638 aa).

The 61-residue stretch at 1–61 (MVAITLPDGK…DRDVNLSIIT (61 aa)) folds into the TGS domain. A catalytic region spans residues 244–536 (DHRRLGREME…LIENFAGRFP (293 aa)). The Zn(2+) site is built by Cys-336, His-387, and His-513.

This sequence belongs to the class-II aminoacyl-tRNA synthetase family. Homodimer. Zn(2+) serves as cofactor.

The protein localises to the cytoplasm. The enzyme catalyses tRNA(Thr) + L-threonine + ATP = L-threonyl-tRNA(Thr) + AMP + diphosphate + H(+). In terms of biological role, catalyzes the attachment of threonine to tRNA(Thr) in a two-step reaction: L-threonine is first activated by ATP to form Thr-AMP and then transferred to the acceptor end of tRNA(Thr). Also edits incorrectly charged L-seryl-tRNA(Thr). The polypeptide is Threonine--tRNA ligase (Paramagnetospirillum magneticum (strain ATCC 700264 / AMB-1) (Magnetospirillum magneticum)).